The primary structure comprises 1049 residues: Protein phosphatase Slingshot homolog 1 (1049 aa).

The segment covering 1 to 12 has biased composition (polar residues); it reads MALVTLQRSPTP. Residues 1 to 28 are disordered; it reads MALVTLQRSPTPSAASSSASNSELEAGS. A2 carries the N-acetylalanine modification. The span at 13 to 25 shows a compositional bias: low complexity; sequence SAASSSASNSELE. A phosphoserine mark is found at S37 and S57. One can recognise a DEK-C domain in the interval 249 to 304; that stretch reads ERTERLIKAKLRSIMMSQDLENVTSKEIRNELEKQMNCNLKELKEFIDNEMLLILG. The region spanning 308 to 449 is the Tyrosine-protein phosphatase domain; the sequence is KPSLIFDHLY…LSEYEGILDA (142 aa). C393 acts as the Phosphocysteine intermediate in catalysis. The tract at residues 456 to 499 is disordered; it reads KLWRQQTDSSLQQPVDDPAGPGDFLPETPDGTPESQLPFLDDAA. Polar residues predominate over residues 458–468; sequence WRQQTDSSLQQ. A Phosphoserine modification is found at S515. Disordered stretches follow at residues 544–603, 693–787, 825–899, and 923–955; these read AAPP…RWGQ, HLAS…KPAK, HTKE…KSPP, and PTSSSMSSNLTRSSSSDSIHSVRGKPGLVKQRT. Residues 564–573 show a composition bias toward basic and acidic residues; the sequence is CEKDVKKKLE. The residue at position 576 (S576) is a Phosphoserine. The segment covering 731 to 742 has biased composition (low complexity); the sequence is GAALEPPASLLE. The span at 772 to 787 shows a compositional bias: basic and acidic residues; the sequence is VIKEESSPKKDMKPAK. S897 bears the Phosphoserine mark. An interaction with YWHAG region spans residues 897–1049; it reads SPPPFFYRLD…LKSPSWMSKS (153 aa). Residues 925–943 are compositionally biased toward low complexity; that stretch reads SSSMSSNLTRSSSSDSIHS. Phosphoserine is present on S978. Residues 989–1049 are disordered; the sequence is TEDLSSEADP…LKSPSWMSKS (61 aa). Residues 1001–1013 show a composition bias toward polar residues; that stretch reads VADSQDTTLSESS.

The protein belongs to the protein-tyrosine phosphatase family. As to quaternary structure, interacts with actin and this stimulates phosphatase activity. Also interacts with LIMK1 and with the 14-3-3 proteins YWHAB, YWHAG, YWHAQ, and YWHAZ. Interaction with 14-3-3 proteins inhibits phosphatase activity and also blocks recruitment to lamellipodia and stimulation by actin. Post-translationally, phosphorylated. Inhibitory phosphorylation by PAK4 promotes binding to YWHAZ. Phosphorylation at Ser-978 is decreased by stimuli which promote actin reorganization and lamellipodia formation. Can be dephosphorylated and activated by PPP3CA/calcineurin A. Phosphorylation decreases immediately prior to telophase.

It localises to the cytoplasm. The protein localises to the cytoskeleton. Its subcellular location is the cell projection. It is found in the lamellipodium. The protein resides in the cleavage furrow. It localises to the midbody. It catalyses the reaction O-phospho-L-tyrosyl-[protein] + H2O = L-tyrosyl-[protein] + phosphate. It carries out the reaction O-phospho-L-seryl-[protein] + H2O = L-seryl-[protein] + phosphate. The catalysed reaction is O-phospho-L-threonyl-[protein] + H2O = L-threonyl-[protein] + phosphate. Its function is as follows. Protein phosphatase which regulates actin filament dynamics. Dephosphorylates and activates the actin binding/depolymerizing factor cofilin, which subsequently binds to actin filaments and stimulates their disassembly. Inhibitory phosphorylation of cofilin is mediated by LIMK1, which may also be dephosphorylated and inactivated by this protein. The sequence is that of Protein phosphatase Slingshot homolog 1 from Homo sapiens (Human).